Consider the following 174-residue polypeptide: RNA pyrophosphohydrolase (174 aa).

Residues 6–149 enclose the Nudix hydrolase domain; that stretch reads GYRPNVGIVI…KRDVYRRALK (144 aa). A Nudix box motif is present at residues 38–59; the sequence is GGIDEGETPEQAMYRELYEEVG.

It belongs to the Nudix hydrolase family. RppH subfamily. It depends on a divalent metal cation as a cofactor.

Accelerates the degradation of transcripts by removing pyrophosphate from the 5'-end of triphosphorylated RNA, leading to a more labile monophosphorylated state that can stimulate subsequent ribonuclease cleavage. This is RNA pyrophosphohydrolase from Photobacterium profundum (strain SS9).